The chain runs to 1009 residues: Glutamate receptor ionotropic, delta-1 (1009 aa).

The N-terminal stretch at 1-20 (MEALTLWLLPWICQCVTVRA) is a signal peptide. Positions 21–436 (DSIIHIGAIF…ERPMGSRLQG (416 aa)) are interaction with CBLN1. At 21–562 (DSIIHIGAIF…SIFSLFAPFD (542 aa)) the chain is on the extracellular side. 3 cysteine pairs are disulfide-bonded: cysteine 80–cysteine 351, cysteine 96–cysteine 128, and cysteine 294–cysteine 306. N-linked (GlcNAc...) asparagine glycans are attached at residues asparagine 131 and asparagine 200. Residues asparagine 422 and asparagine 498 are each glycosylated (N-linked (GlcNAc...) asparagine). Ca(2+)-binding residues include glutamate 527, valine 530, and aspartate 531. The chain crosses the membrane as a helical span at residues 563-583 (FAVWACIAAAIPVVGVLIFVL). The Cytoplasmic portion of the chain corresponds to 584–637 (NRIQAVRSQSATQPRPSASATLHSAIWIVYGAFVQQGGESSVNSVAMRIVMGSW). The helical transmembrane segment at 638–658 (WLFTLIVCSSYTANLAAFLTV) threads the bilayer. The Extracellular segment spans residues 659–830 (SRMDNPIRTF…TEGKSLKLHS (172 aa)). Residues aspartate 753, aspartate 755, and serine 757 each coordinate Ca(2+). A helical membrane pass occupies residues 831-851 (FAGVFCILAIGLLLACLVAAL). Residues 852 to 1009 (ELWWNSNRCH…ALDTSHGTSI (158 aa)) lie on the Cytoplasmic side of the membrane. A compositionally biased stretch (polar residues) spans 931–942 (LPEQSSHGTSRT). The tract at residues 931–960 (LPEQSSHGTSRTLSSGPSSNLPLPLSSSAT) is disordered. Low complexity predominate over residues 943-958 (LSSGPSSNLPLPLSSS).

Belongs to the glutamate-gated ion channel (TC 1.A.10.1) family. GRID1 subfamily. As to quaternary structure, homodimer. Interacts (via extracellular N-terminal domain) with CBLN1 (via C1q domain), and more weakly with CBLN2; the interactions mediate the trans-synaptic adhesion complexes also with neurexins and are required for ligand-gated cation channel activity. In terms of tissue distribution, equally in forebrain and cerebellum.

The protein localises to the postsynaptic cell membrane. The enzyme catalyses Ca(2+)(in) = Ca(2+)(out). It carries out the reaction Na(+)(in) = Na(+)(out). Member of the ionotropic glutamate receptor family, which plays a crucial role in synaptic organization and signal transduction in the central nervous system. Although it shares structural features with ionotropic glutamate receptors, does not bind glutamate as a primary ligand. Instead, forms trans-synaptic adhesion complexes with presynaptic neurexins and cerebellins, regulating NMDA and AMPA receptor activity and influencing synaptic plasticity through signal transduction. In the presence of NRX1B-CBLN1, forms cation-selective channels that are proposed to be gated by glycine and D-serine. However, recent research disputes this ligand-gated cation channel activity. Cation-selective ion channel can be triggered by GRM1 in dopaminergic neurons. Also acts as a receptor for GABA, modulating inhibitory synaptic plasticity through non-ionotropic mechanisms. The polypeptide is Glutamate receptor ionotropic, delta-1 (Grid1) (Mus musculus (Mouse)).